The sequence spans 469 residues: 3-isopropylmalate dehydratase large subunit (469 aa).

[4Fe-4S] cluster is bound by residues cysteine 350, cysteine 410, and cysteine 413.

Belongs to the aconitase/IPM isomerase family. LeuC type 1 subfamily. Heterodimer of LeuC and LeuD. Requires [4Fe-4S] cluster as cofactor.

The catalysed reaction is (2R,3S)-3-isopropylmalate = (2S)-2-isopropylmalate. The protein operates within amino-acid biosynthesis; L-leucine biosynthesis; L-leucine from 3-methyl-2-oxobutanoate: step 2/4. Catalyzes the isomerization between 2-isopropylmalate and 3-isopropylmalate, via the formation of 2-isopropylmaleate. The sequence is that of 3-isopropylmalate dehydratase large subunit from Rhizobium leguminosarum bv. trifolii (strain WSM2304).